The sequence spans 338 residues: RAB6-interacting golgin (338 aa).

Composition is skewed to basic and acidic residues over residues 1 to 14 (MTEK…DEIL) and 46 to 59 (RMPD…DQLR). 2 disordered regions span residues 1 to 109 (MTEK…LNLD) and 127 to 188 (ARDK…SPFK). 2 stretches are compositionally biased toward low complexity: residues 60–73 (KQQQ…IQKP) and 153–167 (SGGD…DDGS). Residues 192–244 (LKDFEQHRRMIEEQNKQKKQMLYQAIEQHTQKTAAESRKIEEIRHELSKLESD) are a coiled coil. The segment at 244–260 (DLAVDVALLRKQIDNAC) is essential for Sas-6 binding. Residues 246–286 (AVDVALLRKQIDNACIHFANVEKQYVKIEAQFLRAKIELHN) form a necessary for localization to the centrosome region. The necessary for localization to the Golgi stretch occupies residues 246–323 (AVDVALLRKQ…TELMQKVGLS (78 aa)). The interval 260–286 (CIHFANVEKQYVKIEAQFLRAKIELHN) is necessary for interaction with Sas-6 and essential for homodimerization.

This sequence belongs to the GORAB family. In terms of assembly, homodimer (via C-terminus); dimerization appears to be required for its trans-Golgi localization but not for its function and centriolar localization. Interacts (via C-terminus) with Rab6; binds Rab6 as a homodimer, this interaction seems to be required for trans-Golgi localization. Interacts (via C-terminus) with Sas-6; binds as a monomer to a Sas-6 homodimer.

The protein localises to the cytoplasm. The protein resides in the cytoskeleton. Its subcellular location is the microtubule organizing center. It is found in the centrosome. It localises to the centriole. The protein localises to the golgi apparatus. The protein resides in the trans-Golgi network. Its function is as follows. Required for centriole duplication likely through its interaction with Sas-6. During embryogenesis, maternally provided protein is required for centrosome duplication and nuclear division cycles of the syncytial embryos. In femoral chordotonal organs, required for sensory cilia structural integrity and functionality necessary for motor coordination. In male germline, has a role in cytokinesis which seems dependent on its localization to the Golgi. In Drosophila melanogaster (Fruit fly), this protein is RAB6-interacting golgin.